The primary structure comprises 359 residues: Alpha-N-acetylneuraminide alpha-2,8-sialyltransferase (359 aa).

The Cytoplasmic portion of the chain corresponds to 1–28; the sequence is MWGRWRGAGGRRGVAQPVIPQMKLLGGR. Residues 29 to 49 traverse the membrane as a helical; Signal-anchor for type II membrane protein segment; that stretch reads VPLGASALGLLIVCWFYIFPG. Over 50–359 the chain is Lumenal; that stretch reads GERLPGHKEM…KKDVSSKKPH (310 aa). 2 N-linked (GlcNAc...) asparagine glycosylation sites follow: asparagine 73 and asparagine 121. 2 disulfides stabilise this stretch: cysteine 140-cysteine 289 and cysteine 154-cysteine 349. Asparagine 145 and asparagine 168 together coordinate CMP-N-acetyl-beta-neuraminate. Asparagine 247 is a glycosylation site (N-linked (GlcNAc...) asparagine). 5 residues coordinate CMP-N-acetyl-beta-neuraminate: serine 276, threonine 277, glycine 278, tryptophan 298, and histidine 312. Histidine 324 functions as the Proton donor/acceptor in the catalytic mechanism.

It belongs to the glycosyltransferase 29 family. In terms of tissue distribution, expressed in the dorsal blastopore lip and in the presumptive neuroectoderm in stage 11 embryos. During gastrulation, strongly expressed in the involuting mesoderm. At stages 13 and 16, expressed in the neural plate and neural fold, paraxial mesoderm and notochord. At stages 19 and 22 (neural tube and early tailbud), strongly expressed in the neural tube and notochord. At the tadpole stage, expressed in the head region, branchial arches and otic and optic primordia. Also localized in the notochord and weakly expressed in the somites. In adults, expressed in the brain and ovary. Isoform 2 (short) is expressed at a low level in the adult testis and muscle, and at a high level in the skin. Isoform 1 (long) is expressed at a high level in the adult lung and kidney. Both isoforms 1 and 2 are expressed in the gut and liver.

It is found in the golgi apparatus membrane. The enzyme catalyses an N-acetyl-alpha-neuraminyl-(2-&gt;3)-beta-D-galactosyl derivative + CMP-N-acetyl-beta-neuraminate = an N-acetyl-alpha-neuraminyl-(2-&gt;8)-N-acetyl-alpha-neuraminyl-(2-&gt;3)-beta-D-galactosyl derivative + CMP + H(+). It carries out the reaction a ganglioside GM3 (d18:1(4E)) + CMP-N-acetyl-beta-neuraminate = a ganglioside GD3 (d18:1(4E)) + CMP + H(+). It catalyses the reaction a ganglioside GD3 (d18:1(4E)) + CMP-N-acetyl-beta-neuraminate = a ganglioside GT3 (d18:1(4E)) + CMP + H(+). The catalysed reaction is a ganglioside GD1a (d18:1(4E)) + CMP-N-acetyl-beta-neuraminate = a ganglioside GT1a (d18:1(4E)) + CMP + H(+). The enzyme catalyses a ganglioside GT1b (d18:1(4E)) + CMP-N-acetyl-beta-neuraminate = a ganglioside GQ1b (d18:1(4E)) + CMP + H(+). It carries out the reaction a ganglioside GM1b (d18:1(4E)) + CMP-N-acetyl-beta-neuraminate = a ganglioside GD1c (d18:1(4E)) + CMP + H(+). It catalyses the reaction a ganglioside GD3 + CMP-N-acetyl-beta-neuraminate = a ganglioside GT3 + CMP + H(+). The catalysed reaction is [alpha-N-acetylneuraminyl-(2-&gt;8)](n)-alpha-N-acetylneuraminyl-(2-&gt;8)-alpha-N-acetylneuraminyl-(2-&gt;3)-beta-D-galactosyl-(1-&gt;4)-beta-D-glucosyl-(1&lt;-&gt;1)-ceramide + CMP-N-acetyl-beta-neuraminate = [alpha-N-acetylneuraminyl-(2-&gt;8)](n+1)-alpha-N-acetylneuraminyl-(2-&gt;8)-alpha-N-acetylneuraminyl-(2-&gt;3)-beta-D-galactosyl-(1-&gt;4)-beta-D-glucosyl-(1&lt;-&gt;1)-ceramide + CMP + H(+). The protein operates within protein modification; protein glycosylation. Its pathway is lipid metabolism; sphingolipid metabolism. Functionally, catalyzes the addition of sialic acid in alpha 2,8-linkage to the sialic acid moiety of the ganglioside GM3 to form ganglioside GD3; gangliosides are a subfamily of complex glycosphingolipds that contain one or more residues of sialic acid. Glycosphingolipids are required for convergence extension movements during early development. Can catalyze the addition of a second alpha-2,8- sialic acid to GD3 to form GT3. Can use GM1b, GD1a and GT1b as acceptor substrates to synthesize GD1c, GT1a and GQ1b respectively. The polypeptide is Alpha-N-acetylneuraminide alpha-2,8-sialyltransferase (Xenopus laevis (African clawed frog)).